We begin with the raw amino-acid sequence, 171 residues long: Actin-related protein 2/3 complex subunit 4 (171 aa).

The protein belongs to the ARPC4 family. In terms of assembly, component of the Arp2/3 complex composed of ARP2, ARP3, ARC40/p41-ARC, ARC35/p34-ARC, ARC18/p21-ARC, ARC19/p20-ARC and ARC16/p16-ARC.

The protein localises to the cytoplasm. It localises to the cytoskeleton. The protein resides in the actin patch. Its function is as follows. Functions as actin-binding component of the Arp2/3 complex which is involved in regulation of actin polymerization and together with an activating nucleation-promoting factor (NPF) mediates the formation of branched actin networks. Seems to contact the mother actin filament. In Saccharomyces cerevisiae (strain ATCC 204508 / S288c) (Baker's yeast), this protein is Actin-related protein 2/3 complex subunit 4 (ARC19).